We begin with the raw amino-acid sequence, 313 residues long: Homeobox protein CDX-2 (313 aa).

Ser60 carries the post-translational modification Phosphoserine. Residues 113–153 (HAHHHPHHHPHHPAAAPSCASGLLQTLNPGPPGPAATGAAE) are disordered. The span at 114-124 (AHHHPHHHPHH) shows a compositional bias: basic residues. The tract at residues 185–215 (KDKYRVVYTDHQRLELEKEFHYSRYITIRRK) is interaction with DNA. The segment at residues 185–244 (KDKYRVVYTDHQRLELEKEFHYSRYITIRRKAELAATLGLSERQVKIWFQNRRAKERKIN) is a DNA-binding region (homeobox). The interaction with 5-mCpG DNA stretch occupies residues 227 to 241 (RQVKIWFQNRRAKER). The tract at residues 242–313 (KINKKKLQQQ…GGVLNPTVTQ (72 aa)) is disordered. 2 stretches are compositionally biased toward low complexity: residues 249–261 (QQQQQQQQQQQLA) and 271–300 (QPGSLRSVPEPLSPVSSLQGSVPGSVPGVL). Ser283 bears the Phosphoserine mark. The 4S motif; modulates transactivation activity and protein stability motif lies at 283–295 (SPVSSLQGSVPGS).

It belongs to the Caudal homeobox family. In terms of assembly, can bind DNA as a monomer or homodimer. Post-translationally, ubiquitinated, leading to its degradation by the proteasome. In terms of processing, phosphorylation at Ser-60 reduces transactivation capacity. Phosphorylation at Ser-283 reduces transactivation capacity and also increases ubiquitin-dependent proteasome degradation. In terms of tissue distribution, expressed in the intestine.

It localises to the nucleus. Transcription factor which regulates the transcription of multiple genes expressed in the intestinal epithelium. Binds to the promoter of the intestinal sucrase-isomaltase SI and activates SI transcription. Binds to the DNA sequence 5'-ATAAAAACTTAT-3' in the promoter region of VDR and activates VDR transcription. Binds to and activates transcription of LPH. Activates transcription of CLDN2 and intestinal mucin MUC2. Binds to the 5'-AATTTTTTACAACACCT-3' DNA sequence in the promoter region of CA1 and activates CA1 transcription. Important in broad range of functions from early differentiation to maintenance of the intestinal epithelial lining of both the small and large intestine. Binds preferentially to methylated DNA. The sequence is that of Homeobox protein CDX-2 (CDX2) from Mesocricetus auratus (Golden hamster).